The primary structure comprises 149 residues: Snake venom vascular endothelial growth factor toxin 2 (149 aa).

The N-terminal stretch at 1–24 is a signal peptide; it reads MAAYLLAVAILFCIQGWPSGTVQG. Pyrrolidone carboxylic acid is present on Gln25. 3 disulfides stabilise this stretch: Cys38–Cys80, Cys69–Cys115, and Cys73–Cys117. The tract at residues 118–149 is disordered; sequence RPRSGRVNSGKRKRNPEEGGAESQVPLGLTSF.

This sequence belongs to the PDGF/VEGF growth factor family. Snake venom VEGF subfamily. In terms of assembly, homodimer; disulfide-linked. Interacts with VEGF receptor-1 (FLT1) with a high affinity, whereas it binds to VEGF receptor-2 (KDR) with a low affinity. Does not bind VEGF receptor-3 (FLT4). Expressed by the venom gland.

It localises to the secreted. Snake venom VEGFs that may contribute to venom dispersion and prey subjugation by inducing vascular permeability and hypotension. This protein induces an increase in capillary permeability after intradermal injection, as well as a drastic hypotensive effect after intravenous injection. The hypotension is mediated by nitric oxide (NO), which is produced by VEGF-activated endothelium NO synthase. Also induces angiogenesis in vitro. Like other crotalid VEGFs, this protein interacts with VEGF receptor-1 (FLT1) with a high affinity, whereas it binds to VEGF receptor-2 (KDR) with a low affinity. This Sistrurus catenatus edwardsii (Desert massasauga) protein is Snake venom vascular endothelial growth factor toxin 2.